An 81-amino-acid chain; its full sequence is ATP synthase subunit c (81 aa).

2 helical membrane passes run 7 to 27 (AASV…PGIG) and 57 to 77 (LAFM…LLFA).

It belongs to the ATPase C chain family. F-type ATPases have 2 components, F(1) - the catalytic core - and F(0) - the membrane proton channel. F(1) has five subunits: alpha(3), beta(3), gamma(1), delta(1), epsilon(1). F(0) has four main subunits: a(1), b(1), b'(1) and c(10-14). The alpha and beta chains form an alternating ring which encloses part of the gamma chain. F(1) is attached to F(0) by a central stalk formed by the gamma and epsilon chains, while a peripheral stalk is formed by the delta, b and b' chains.

The protein resides in the cellular thylakoid membrane. F(1)F(0) ATP synthase produces ATP from ADP in the presence of a proton or sodium gradient. F-type ATPases consist of two structural domains, F(1) containing the extramembraneous catalytic core and F(0) containing the membrane proton channel, linked together by a central stalk and a peripheral stalk. During catalysis, ATP synthesis in the catalytic domain of F(1) is coupled via a rotary mechanism of the central stalk subunits to proton translocation. Functionally, key component of the F(0) channel; it plays a direct role in translocation across the membrane. A homomeric c-ring of between 10-14 subunits forms the central stalk rotor element with the F(1) delta and epsilon subunits. This is ATP synthase subunit c from Synechococcus elongatus (strain ATCC 33912 / PCC 7942 / FACHB-805) (Anacystis nidulans R2).